A 130-amino-acid polypeptide reads, in one-letter code: Small ribosomal subunit protein uS9 (130 aa).

It belongs to the universal ribosomal protein uS9 family.

This chain is Small ribosomal subunit protein uS9, found in Clostridium beijerinckii (strain ATCC 51743 / NCIMB 8052) (Clostridium acetobutylicum).